A 125-amino-acid chain; its full sequence is Small ribosomal subunit protein uS13 (125 aa).

It belongs to the universal ribosomal protein uS13 family. As to quaternary structure, part of the 30S ribosomal subunit. Forms a loose heterodimer with protein S19. Forms two bridges to the 50S subunit in the 70S ribosome.

Its function is as follows. Located at the top of the head of the 30S subunit, it contacts several helices of the 16S rRNA. In the 70S ribosome it contacts the 23S rRNA (bridge B1a) and protein L5 of the 50S subunit (bridge B1b), connecting the 2 subunits; these bridges are implicated in subunit movement. Contacts the tRNAs in the A and P-sites. The protein is Small ribosomal subunit protein uS13 of Rickettsia prowazekii (strain Madrid E).